The sequence spans 227 residues: Cytidylate kinase (227 aa).

12-20 (GPSGAGKGT) serves as a coordination point for ATP.

This sequence belongs to the cytidylate kinase family. Type 1 subfamily.

The protein localises to the cytoplasm. The catalysed reaction is CMP + ATP = CDP + ADP. It catalyses the reaction dCMP + ATP = dCDP + ADP. The polypeptide is Cytidylate kinase (Shigella boydii serotype 18 (strain CDC 3083-94 / BS512)).